A 538-amino-acid polypeptide reads, in one-letter code: Syncytin-2 (538 aa).

The first 15 residues, 1-15, serve as a signal peptide directing secretion; it reads MGLLLLVLILTPSLA. Residues 16–478 lie on the Extracellular side of the membrane; the sequence is AYRHPDFPLL…GWLNWEGTWK (463 aa). A CXXC motif is present at residues 43–46; sequence CWLC. 3 cysteine pairs are disulfide-bonded: C43–C46, C43–C439, and C431–C438. N-linked (GlcNAc...) asparagine glycans are attached at residues N133, N146, N177, N220, N241, N247, N312, and N332. Positions 354–374 are fusion peptide; the sequence is FIPLLAGLGILAGTGTGIAGI. The CKS-17 signature appears at 414-430; the sequence is LQNRRGLDMLTAAQGGI. The CX6CC motif lies at 431–439; that stretch reads CLALDEKCC. N-linked (GlcNAc...) asparagine glycosylation occurs at N443. Residues 479-499 traverse the membrane as a helical segment; that stretch reads WFSWVLPLTGPLVSLLLLLLF. At 500 to 538 the chain is on the cytoplasmic side; it reads GPCLLNLITQFVSSRLQAIKLQTNLSAGRHPRNIQESPF.

Belongs to the gamma type-C retroviral envelope protein family. HERV class-I FRD env subfamily. In terms of assembly, the surface and transmembrane proteins form a heterodimer. They are attached by non-covalent interactions or by a labile interchain disulfide bond. Interacts with MFSD2A. Specific enzymatic cleavages in vivo yield the mature SU and TM proteins. Post-translationally, the CXXC motif is highly conserved across a broad range of retroviral envelope proteins. It is thought to participate in the formation of a labile disulfide bond possibly with the CX6CC motif present in the transmembrane protein. Isomerization of the intersubunit disulfide bond to an SU intrachain disulfide bond is thought to occur upon receptor recognition in order to allow membrane fusion. As to expression, expressed at higher level in placenta. Expressed at lower level in adrenal, bone marrow, brain, breast, colon, kidney, lung, ovary, peripheral blood lymphocytes, prostate, skin, spleen, testis, thymus, thyroid, trachea.

Its subcellular location is the virion. It is found in the cell membrane. Functionally, this endogenous retroviral envelope protein has retained its original fusogenic properties and participates in trophoblast fusion and the formation of a syncytium during placenta morphogenesis. The interaction with MFSD2A is apparently important for this process. In terms of biological role, endogenous envelope proteins may have kept, lost or modified their original function during evolution but this one can still make pseudotypes with MLV, HIV-1 or SIV-1 virions and confer infectivity. Retroviral envelope proteins mediate receptor recognition and membrane fusion during early infection. The surface protein mediates receptor recognition, while the transmembrane protein anchors the envelope heterodimer to the viral membrane through one transmembrane domain. The other hydrophobic domain, called fusion peptide, mediates fusion of the viral membrane with the target cell membrane. The polypeptide is Syncytin-2 (ERVFRD-1) (Homo sapiens (Human)).